The following is a 501-amino-acid chain: ATP synthase subunit alpha (501 aa).

ATP is bound at residue 169 to 176 (GDRQTGKT).

It belongs to the ATPase alpha/beta chains family. F-type ATPases have 2 components, CF(1) - the catalytic core - and CF(0) - the membrane proton channel. CF(1) has five subunits: alpha(3), beta(3), gamma(1), delta(1), epsilon(1). CF(0) has three main subunits: a(1), b(2) and c(9-12). The alpha and beta chains form an alternating ring which encloses part of the gamma chain. CF(1) is attached to CF(0) by a central stalk formed by the gamma and epsilon chains, while a peripheral stalk is formed by the delta and b chains.

The protein resides in the cell membrane. The enzyme catalyses ATP + H2O + 4 H(+)(in) = ADP + phosphate + 5 H(+)(out). Its function is as follows. Produces ATP from ADP in the presence of a proton gradient across the membrane. The alpha chain is a regulatory subunit. The polypeptide is ATP synthase subunit alpha (Streptococcus uberis (strain ATCC BAA-854 / 0140J)).